The following is an 861-amino-acid chain: DNA mismatch repair protein MutS (861 aa).

609–616 lines the ATP pocket; that stretch reads GPNMAGKS.

Belongs to the DNA mismatch repair MutS family.

In terms of biological role, this protein is involved in the repair of mismatches in DNA. It is possible that it carries out the mismatch recognition step. This protein has a weak ATPase activity. This chain is DNA mismatch repair protein MutS, found in Borrelia hermsii (strain HS1 / DAH).